We begin with the raw amino-acid sequence, 347 residues long: Holliday junction branch migration complex subunit RuvB (347 aa).

The interval 1–186 (MKDENSINFL…FGITARFELY (186 aa)) is large ATPase domain (RuvB-L). Residues Leu25, Arg26, Gly67, Lys70, Thr71, Thr72, 133-135 (EDY), Arg176, Tyr186, and Arg223 each bind ATP. A Mg(2+)-binding site is contributed by Thr71. A small ATPAse domain (RuvB-S) region spans residues 187 to 257 (SEIELVEIIK…IVAIGLEMLR (71 aa)). The tract at residues 260–347 (GEGLDEQDRN…NLNENQRVSF (88 aa)) is head domain (RuvB-H). DNA contacts are provided by Arg315 and Arg320.

It belongs to the RuvB family. As to quaternary structure, homohexamer. Forms an RuvA(8)-RuvB(12)-Holliday junction (HJ) complex. HJ DNA is sandwiched between 2 RuvA tetramers; dsDNA enters through RuvA and exits via RuvB. An RuvB hexamer assembles on each DNA strand where it exits the tetramer. Each RuvB hexamer is contacted by two RuvA subunits (via domain III) on 2 adjacent RuvB subunits; this complex drives branch migration. In the full resolvosome a probable DNA-RuvA(4)-RuvB(12)-RuvC(2) complex forms which resolves the HJ.

It is found in the cytoplasm. The enzyme catalyses ATP + H2O = ADP + phosphate + H(+). The RuvA-RuvB-RuvC complex processes Holliday junction (HJ) DNA during genetic recombination and DNA repair, while the RuvA-RuvB complex plays an important role in the rescue of blocked DNA replication forks via replication fork reversal (RFR). RuvA specifically binds to HJ cruciform DNA, conferring on it an open structure. The RuvB hexamer acts as an ATP-dependent pump, pulling dsDNA into and through the RuvAB complex. RuvB forms 2 homohexamers on either side of HJ DNA bound by 1 or 2 RuvA tetramers; 4 subunits per hexamer contact DNA at a time. Coordinated motions by a converter formed by DNA-disengaged RuvB subunits stimulates ATP hydrolysis and nucleotide exchange. Immobilization of the converter enables RuvB to convert the ATP-contained energy into a lever motion, pulling 2 nucleotides of DNA out of the RuvA tetramer per ATP hydrolyzed, thus driving DNA branch migration. The RuvB motors rotate together with the DNA substrate, which together with the progressing nucleotide cycle form the mechanistic basis for DNA recombination by continuous HJ branch migration. Branch migration allows RuvC to scan DNA until it finds its consensus sequence, where it cleaves and resolves cruciform DNA. This Borreliella afzelii (strain PKo) (Borrelia afzelii) protein is Holliday junction branch migration complex subunit RuvB.